The following is a 445-amino-acid chain: Phosphoglucosamine mutase (445 aa).

Serine 99 serves as the catalytic Phosphoserine intermediate. Mg(2+) contacts are provided by serine 99, aspartate 242, aspartate 244, and aspartate 246. At serine 99 the chain carries Phosphoserine.

This sequence belongs to the phosphohexose mutase family. It depends on Mg(2+) as a cofactor. Activated by phosphorylation.

It carries out the reaction alpha-D-glucosamine 1-phosphate = D-glucosamine 6-phosphate. Functionally, catalyzes the conversion of glucosamine-6-phosphate to glucosamine-1-phosphate. The sequence is that of Phosphoglucosamine mutase from Campylobacter jejuni (strain RM1221).